A 230-amino-acid polypeptide reads, in one-letter code: Small ribosomal subunit protein uS7B (230 aa).

The tract at residues 1 to 22 (MSEEVVESSSQEASQVIPQEQE) is disordered. The segment covering 7–16 (ESSSQEASQV) has biased composition (low complexity).

The protein belongs to the universal ribosomal protein uS7 family.

This Drosophila melanogaster (Fruit fly) protein is Small ribosomal subunit protein uS7B (RpS5b).